A 657-amino-acid polypeptide reads, in one-letter code: MTQLAIGKPTPLGAHYDGQGVNFTLFSAHAERVELCVFDANGQEHRYDLPGHSGDIWHGYLPDARPGLRYGYRVHGPWQPAEGHRFNPAKLLIDPCARQIDGEFKDNPLLHAGHNEPDYRDNAAIAPKCVVVVDHYDWEDDAPPRTPWGSTIIYEAHVKGLTYLHPEIPVEIRGTYKALGHPVMINYLKQLGITALELLPVAQFASEPRLQRMGLSNYWGYNPVAMFALHPAYACSPETALDEFRDAIKALHKAGIEVILDIVLNHSAELDLDGPLFSLRGIDNRSYYWIREDGDYHNWTGCGNTLNLSHPAVVDYASACLRYWVETCHVDGFRFDLAAVMGRTPEFRQDAPLFTAIQNCPVLSQVKLIAEPWDIAPGGYQVGNFPPLFAEWNDHFRDAARRFWLHYDLPLGVFAGRFAASSDVFKRNGRLPSAAINLVTAHDGFTLRDCVCFNHKHNEANGEENRDGTNNNYSNNHGKEGLGGTLDLVERRRDSIHALLTTLLLSQGTPMLLAGDEHGHSQHGNNNAYCQDNQLTWLDWSQASSGLTAFTAALIHLRKRIPALMENRWWEEGDGNVRWLNRYAQPLSTDEWQNGPKQLQILLSDRFLIAINATLEVTEIVLPAGEWHAIPPFAGEDNPVITAVWQGPAHGLCVFQR.

Asp336 acts as the Nucleophile in catalysis. Glu371 functions as the Proton donor in the catalytic mechanism. The segment at 460-479 (ANGEENRDGTNNNYSNNHGK) is disordered.

Belongs to the glycosyl hydrolase 13 family.

It carries out the reaction Hydrolysis of (1-&gt;6)-alpha-D-glucosidic linkages to branches with degrees of polymerization of three or four glucose residues in limit dextrin.. It participates in glycan degradation; glycogen degradation. Its function is as follows. Removes maltotriose and maltotetraose chains that are attached by 1,6-alpha-linkage to the limit dextrin main chain, generating a debranched limit dextrin. The sequence is that of Glycogen debranching enzyme from Escherichia coli O127:H6 (strain E2348/69 / EPEC).